A 131-amino-acid polypeptide reads, in one-letter code: Small ribosomal subunit protein bS6 (131 aa).

The tract at residues 96–131 (VTEASPMVKAKDERRERRDDFANETADDAEAGDSEE) is disordered. A compositionally biased stretch (basic and acidic residues) spans 104-116 (KAKDERRERRDDF). Residues 120-131 (TADDAEAGDSEE) show a composition bias toward acidic residues.

This sequence belongs to the bacterial ribosomal protein bS6 family.

Binds together with bS18 to 16S ribosomal RNA. This is Small ribosomal subunit protein bS6 from Salmonella arizonae (strain ATCC BAA-731 / CDC346-86 / RSK2980).